The primary structure comprises 364 residues: Fructose-bisphosphate aldolase A (364 aa).

Y5 carries the phosphotyrosine modification. T9 carries the post-translational modification Phosphothreonine. Phosphoserine is present on residues S36 and S39. N6-acetyllysine; alternate is present on K42. K42 is covalently cross-linked (Glycyl lysine isopeptide (Lys-Gly) (interchain with G-Cter in SUMO1); alternate). A Glycyl lysine isopeptide (Lys-Gly) (interchain with G-Cter in SUMO2); alternate cross-link involves residue K42. R43 lines the beta-D-fructose 1,6-bisphosphate pocket. Phosphoserine is present on S46. Position 99 is an N6-(2-hydroxyisobutyryl)lysine (K99). K108 carries the post-translational modification N6-acetyllysine. K111 carries the N6-acetyllysine; alternate modification. The residue at position 111 (K111) is an N6-malonyllysine; alternate. S132 carries the phosphoserine modification. An N6-(2-hydroxyisobutyryl)lysine modification is found at K147. E188 acts as the Proton acceptor in catalysis. K230 acts as the Schiff-base intermediate with dihydroxyacetone-P in catalysis. A Phosphoserine modification is found at S272. Beta-D-fructose 1,6-bisphosphate is bound by residues 272–274, S301, and R304; that span reads SGG. K312 is modified (N6-malonyllysine). K330 carries the post-translational modification N6-acetyllysine.

This sequence belongs to the class I fructose-bisphosphate aldolase family. Homotetramer. Interacts with SNX9 and WAS. Interacts with FBP2; the interaction blocks FBP2 inhibition by physiological concentrations of AMP and reduces inhibition by Ca(2+).

It is found in the cytoplasm. The protein resides in the myofibril. Its subcellular location is the sarcomere. It localises to the i band. The protein localises to the m line. The enzyme catalyses beta-D-fructose 1,6-bisphosphate = D-glyceraldehyde 3-phosphate + dihydroxyacetone phosphate. It functions in the pathway carbohydrate degradation; glycolysis; D-glyceraldehyde 3-phosphate and glycerone phosphate from D-glucose: step 4/4. Its function is as follows. Catalyzes the reversible conversion of beta-D-fructose 1,6-bisphosphate (FBP) into two triose phosphate and plays a key role in glycolysis and gluconeogenesis. In addition, may also function as scaffolding protein. In Pan troglodytes (Chimpanzee), this protein is Fructose-bisphosphate aldolase A (ALDOA).